The following is a 210-amino-acid chain: Helix-loop-helix protein 26 (210 aa).

Positions 1-15 are enriched in low complexity; sequence MSSSPTSSSSGSPSS. The interval 1–33 is disordered; it reads MSSSPTSSSSGSPSSHGHRSETEKQRRDDTNDL. In terms of domain architecture, bHLH spans 14 to 65; sequence SSHGHRSETEKQRRDDTNDLLNEFKKIVQKSESEKLSKEEVLFRIVKLLSGI. A compositionally biased stretch (basic and acidic residues) spans 18-33; that stretch reads HRSETEKQRRDDTNDL.

As to quaternary structure, homodimer; binds to DNA as a homodimer. In terms of tissue distribution, expressed in intestinal cells (at protein level).

The protein resides in the nucleus. As a homodimer binds DNA via the E-box sequence 5'-CACGTG-3'. Represses lag-2 transcription during embryogenesis via Notch signaling, in an unc-37-dependent manner. Also represses tbx-37 independent of Notch signaling. In the intestine, plays a role in probiotic-mediated protection against infections by pathogens such as S.enterica. This is most likely by positively regulating the expression of genes such as bar-1 upon exposure to probiotic bacteria such as the E.faecium. The sequence is that of Helix-loop-helix protein 26 from Caenorhabditis elegans.